The chain runs to 833 residues: Phosphatidylinositol-3-phosphatase myotubularin-2 (833 aa).

Residues 42–109 enclose the GRAM domain; sequence GSYSNLDCLL…VAIEKFNKLA (68 aa). In terms of domain architecture, Myotubularin phosphatase spans 181–647; the sequence is TNPKERLLNE…LAPTLWPQFH (467 aa). Residues 329-332, 354-355, 440-446, and Arg486 each bind substrate; these read NGAK, NI, and CSDGWDR. Cys440 serves as the catalytic Phosphocysteine intermediate. The interval 503 to 530 is disordered; sequence QSSSARSFPSSPVRQSPGSAAAQSSSSS. Over residues 504 to 530 the composition is skewed to low complexity; that stretch reads SSSARSFPSSPVRQSPGSAAAQSSSSS. Residues 660–717 are a coiled coil; sequence ETEDQCRAMTVKYSEMKKEKEEAERKVDELSSAMESLNEELLNERDISRAARESAKRA. The disordered stretch occupies residues 753–772; sequence KCSHSIPQKQSEDNTTDVSE.

Belongs to the protein-tyrosine phosphatase family. Non-receptor class myotubularin subfamily. Mostly expressed in flowers and roots, and, to a lower extent, in siliques and leaves.

Its subcellular location is the cytoplasm. The enzyme catalyses a 1,2-diacyl-sn-glycero-3-phospho-(1D-myo-inositol-3-phosphate) + H2O = a 1,2-diacyl-sn-glycero-3-phospho-(1D-myo-inositol) + phosphate. It catalyses the reaction a 1,2-diacyl-sn-glycero-3-phospho-(1D-myo-inositol-3,5-bisphosphate) + H2O = a 1,2-diacyl-sn-glycero-3-phospho-(1D-myo-inositol-5-phosphate) + phosphate. In terms of biological role, phosphatase with phosphoinositide 3'-phosphatase activity that can use phosphatidylinositol-3-phosphate (PtdIns3P) and phosphatidylinositol-3,5-diphosphate (PtdIns3,5P(2)) as substrates and produces phosphatidylinositol-5-phosphate (PtdIns5P); participates in pathway(s) that transfer gene regulatory signals to the nucleus. The protein is Phosphatidylinositol-3-phosphatase myotubularin-2 (MTM2) of Arabidopsis thaliana (Mouse-ear cress).